The primary structure comprises 514 residues: Na(+)/H(+) antiporter NhaB (514 aa).

11 helical membrane-spanning segments follow: residues 21-41 (LAIV…SPFI), 43-63 (GWLL…CYPL), 88-108 (IMAN…IFFM), 143-163 (FLDA…FYGV), 203-223 (LMMH…VGEP), 239-259 (FFLR…LTCF), 304-324 (ALIA…VGLI), 349-369 (QESL…AVII), 390-410 (LALF…VFVA), 448-468 (ATPN…SPLI), and 484-504 (IVLS…ATIW).

The protein belongs to the NhaB Na(+)/H(+) (TC 2.A.34) antiporter family.

The protein resides in the cell inner membrane. It catalyses the reaction 2 Na(+)(in) + 3 H(+)(out) = 2 Na(+)(out) + 3 H(+)(in). Na(+)/H(+) antiporter that extrudes sodium in exchange for external protons. This Haemophilus influenzae (strain 86-028NP) protein is Na(+)/H(+) antiporter NhaB.